The sequence spans 346 residues: Methylthioribose-1-phosphate isomerase (346 aa).

Residues 48–50 (RGA), R91, and Q200 each bind substrate. D241 functions as the Proton donor in the catalytic mechanism. 251–252 (NK) is a binding site for substrate.

It belongs to the eIF-2B alpha/beta/delta subunits family. MtnA subfamily.

The catalysed reaction is 5-(methylsulfanyl)-alpha-D-ribose 1-phosphate = 5-(methylsulfanyl)-D-ribulose 1-phosphate. It participates in amino-acid biosynthesis; L-methionine biosynthesis via salvage pathway; L-methionine from S-methyl-5-thio-alpha-D-ribose 1-phosphate: step 1/6. Functionally, catalyzes the interconversion of methylthioribose-1-phosphate (MTR-1-P) into methylthioribulose-1-phosphate (MTRu-1-P). In Picosynechococcus sp. (strain ATCC 27264 / PCC 7002 / PR-6) (Agmenellum quadruplicatum), this protein is Methylthioribose-1-phosphate isomerase.